The following is a 362-amino-acid chain: Ferrochelatase (362 aa).

Residues His-212 and Glu-294 each contribute to the Fe cation site.

It belongs to the ferrochelatase family.

It localises to the cytoplasm. The enzyme catalyses heme b + 2 H(+) = protoporphyrin IX + Fe(2+). It functions in the pathway porphyrin-containing compound metabolism; protoheme biosynthesis; protoheme from protoporphyrin-IX: step 1/1. Catalyzes the ferrous insertion into protoporphyrin IX. In Leptospira biflexa serovar Patoc (strain Patoc 1 / Ames), this protein is Ferrochelatase.